The primary structure comprises 625 residues: Probable potassium transport system protein Kup (625 aa).

Helical transmembrane passes span 10–30 (LAAL…TSPL), 50–70 (LLGV…LKYV), 102–122 (YFPL…DSVI), 135–155 (LGVA…AILV), 172–192 (FGPV…VNII), 214–234 (GFLA…AEAL), 251–271 (FLIA…LLLL), 284–304 (LGAW…IIAS), 340–360 (IYIP…VIGF), 369–389 (AYGI…FFVI), 397–417 (LILC…LFSA), and 422–442 (LFHG…LMLT).

It belongs to the HAK/KUP transporter (TC 2.A.72) family.

It is found in the cell inner membrane. The catalysed reaction is K(+)(in) + H(+)(in) = K(+)(out) + H(+)(out). In terms of biological role, transport of potassium into the cell. Likely operates as a K(+):H(+) symporter. This Herminiimonas arsenicoxydans protein is Probable potassium transport system protein Kup.